The primary structure comprises 477 residues: Ribulose bisphosphate carboxylase large chain (477 aa).

A propeptide spanning residues 1 to 2 (MS) is cleaved from the precursor. Pro3 bears the N-acetylproline mark. Lys14 is subject to N6,N6,N6-trimethyllysine. Residues Asn123 and Thr173 each coordinate substrate. The Proton acceptor role is filled by Lys175. Lys177 lines the substrate pocket. Mg(2+) is bound by residues Lys201, Asp203, and Glu204. Lys201 bears the N6-carboxylysine mark. Residue His294 is the Proton acceptor of the active site. Substrate-binding residues include Arg295, His327, and Ser379.

This sequence belongs to the RuBisCO large chain family. Type I subfamily. As to quaternary structure, heterohexadecamer of 8 large chains and 8 small chains; disulfide-linked. The disulfide link is formed within the large subunit homodimers. Mg(2+) serves as cofactor. Post-translationally, the disulfide bond which can form in the large chain dimeric partners within the hexadecamer appears to be associated with oxidative stress and protein turnover.

Its subcellular location is the plastid. It localises to the chloroplast. The catalysed reaction is 2 (2R)-3-phosphoglycerate + 2 H(+) = D-ribulose 1,5-bisphosphate + CO2 + H2O. It carries out the reaction D-ribulose 1,5-bisphosphate + O2 = 2-phosphoglycolate + (2R)-3-phosphoglycerate + 2 H(+). In terms of biological role, ruBisCO catalyzes two reactions: the carboxylation of D-ribulose 1,5-bisphosphate, the primary event in carbon dioxide fixation, as well as the oxidative fragmentation of the pentose substrate in the photorespiration process. Both reactions occur simultaneously and in competition at the same active site. This chain is Ribulose bisphosphate carboxylase large chain, found in Agrostis stolonifera (Creeping bentgrass).